Reading from the N-terminus, the 786-residue chain is Receptor-interacting serine/threonine-protein kinase 4 (786 aa).

The Protein kinase domain occupies 22 to 286 (FAGWEKVGSG…QEITSETEDL (265 aa)). ATP-binding positions include 28 to 36 (VGSGGFGQV) and Lys51. Lys51 participates in a covalent cross-link: Glycyl lysine isopeptide (Lys-Gly) (interchain with G-Cter in ubiquitin). Catalysis depends on Asp143, which acts as the Proton acceptor. Lys145 is covalently cross-linked (Glycyl lysine isopeptide (Lys-Gly) (interchain with G-Cter in ubiquitin)). Disordered stretches follow at residues 293-328 (EVKDLAHEPGEKSSLESKSEARPESSRLKRASAPPF) and 347-378 (QTLEGPEELSRSSSECKLPSSSSGKRLSGVSS). Basic and acidic residues predominate over residues 295 to 319 (KDLAHEPGEKSSLESKSEARPESSR). The segment covering 357-378 (RSSSECKLPSSSSGKRLSGVSS) has biased composition (low complexity). ANK repeat units lie at residues 439 to 468 (SSASLLHLAVEAGQEECVKWLLLNNANPNL), 472 to 501 (KGSTPLHMAVERKGRGIVELLLARKTSVNA), 505 to 534 (DQWTALHFAAQNGDEASTRLLLEKNASVNE), 538 to 567 (EGRTPMHVACQHGQENIVRTLLRRGVDVGL), 571 to 601 (DAWLPLHYAAWQGHLPIVKLLAKQPGVSVNA), 605 to 634 (DGRTPLHLAAQRGHYRVARILIDLCSDVNI), 638 to 667 (QAQTPLHVAAETGHTSTARLLLHRGAGKEA), 671 to 700 (EGYTALHLAAQNGHLATVKLLIEEKADVMA), 704 to 734 (LNQTALHLAAARGHSEVVEELVSADLIDLSD), and 736 to 765 (QGLSALHLAAQGRHSQTVETLLKHGAHINL).

The protein belongs to the protein kinase superfamily. TKL Ser/Thr protein kinase family. In terms of assembly, interacts with PRKCB. Interacts with TRAF1, TRAF2, TRAF3 and TRAF5. Interacts with BIRC2/c-IAP1, BIRC3/c-IAP2 and XIAP/BIRC4. Post-translationally, may be phosphorylated by MAP3K2 and MAP3K3. In terms of processing, proteolytically cleaved by during Fas-induced apoptosis. Cleavage at Asp-342 and Asp-380. Polyubiquitinated with 'Lys-48' and 'Lys-63'-linked chains by BIRC2/c-IAP1 and BIRC3/c-IAP2, leading to activation of NF-kappa-B. In terms of tissue distribution, expressed in the epidermis of the skin (at protein level). Ubiquitously expressed, with an abundant expression in the thymus, bone marrow, pro-B, pre-B and immature B cells and a weak expression in the spleen.

It is found in the cytoplasm. The protein localises to the membrane. It catalyses the reaction L-seryl-[protein] + ATP = O-phospho-L-seryl-[protein] + ADP + H(+). The enzyme catalyses L-threonyl-[protein] + ATP = O-phospho-L-threonyl-[protein] + ADP + H(+). Serine/threonine protein kinase. Required for embryonic skin development and correct skin homeostasis in adults, via phosphorylation of PKP1 and subsequent promotion of keratinocyte differentiation and cell adhesion. It is a direct transcriptional target of TP63. Plays a role in NF-kappa-B activation. This is Receptor-interacting serine/threonine-protein kinase 4 (Ripk4) from Mus musculus (Mouse).